We begin with the raw amino-acid sequence, 134 residues long: ATP synthase epsilon chain, chloroplastic (134 aa).

The protein belongs to the ATPase epsilon chain family. F-type ATPases have 2 components, CF(1) - the catalytic core - and CF(0) - the membrane proton channel. CF(1) has five subunits: alpha(3), beta(3), gamma(1), delta(1), epsilon(1). CF(0) has three main subunits: a, b and c.

Its subcellular location is the plastid. The protein resides in the chloroplast thylakoid membrane. In terms of biological role, produces ATP from ADP in the presence of a proton gradient across the membrane. The chain is ATP synthase epsilon chain, chloroplastic from Porphyra purpurea (Red seaweed).